Here is a 632-residue protein sequence, read N- to C-terminus: tRNA uridine 5-carboxymethylaminomethyl modification enzyme MnmG (632 aa).

Residues 13–18 (GGGHAG), Val-125, and Ser-180 each bind FAD. An NAD(+)-binding site is contributed by 273-287 (GPRYCPSIEDKVMRF). An FAD-binding site is contributed by Gln-370.

This sequence belongs to the MnmG family. Homodimer. Heterotetramer of two MnmE and two MnmG subunits. The cofactor is FAD.

It localises to the cytoplasm. In terms of biological role, NAD-binding protein involved in the addition of a carboxymethylaminomethyl (cmnm) group at the wobble position (U34) of certain tRNAs, forming tRNA-cmnm(5)s(2)U34. This chain is tRNA uridine 5-carboxymethylaminomethyl modification enzyme MnmG, found in Proteus mirabilis (strain HI4320).